Consider the following 118-residue polypeptide: MIVGHGIDLQEISAIEKVYQRNPRFAQKILTEQELAIFESFPYKRRLSYLAGRWSGKEAFVKAIGTGIGRLTFQDIEILNDVRGCPILTKSPFKGNSFISISHSGNYVQASVILEDKK.

Mg(2+) is bound by residues Asp-8 and Glu-58.

This sequence belongs to the P-Pant transferase superfamily. AcpS family. Mg(2+) is required as a cofactor.

It is found in the cytoplasm. The catalysed reaction is apo-[ACP] + CoA = holo-[ACP] + adenosine 3',5'-bisphosphate + H(+). In terms of biological role, transfers the 4'-phosphopantetheine moiety from coenzyme A to a Ser of acyl-carrier-protein. In Streptococcus pyogenes serotype M12 (strain MGAS2096), this protein is Holo-[acyl-carrier-protein] synthase.